Consider the following 247-residue polypeptide: Probable transcriptional regulatory protein Tola_2714 (247 aa).

The segment at 1–21 (MAGHSKWANIKHRKAAQDAKR) is disordered.

It belongs to the TACO1 family.

The protein resides in the cytoplasm. The polypeptide is Probable transcriptional regulatory protein Tola_2714 (Tolumonas auensis (strain DSM 9187 / NBRC 110442 / TA 4)).